Reading from the N-terminus, the 350-residue chain is Pleckstrin (350 aa).

One can recognise a PH 1 domain in the interval 4-101 (KRIREGYLVK…WVRDIKKAIK (98 aa)). The residue at position 64 (Lys64) is an N6-acetyllysine. A phosphoserine mark is found at Ser113 and Ser117. Positions 136-221 (PEKGIKELNL…NPDAFYYFPD (86 aa)) constitute a DEP domain. The region spanning 244-347 (IIIKQGCLLK…WIKAIQVASR (104 aa)) is the PH 2 domain.

Its function is as follows. Major protein kinase C substrate of platelets. The sequence is that of Pleckstrin (Plek) from Rattus norvegicus (Rat).